Consider the following 298-residue polypeptide: tRNA dimethylallyltransferase (298 aa).

Residue 16 to 23 (GPTASGKS) participates in ATP binding. 18–23 (TASGKS) provides a ligand contact to substrate. Interaction with substrate tRNA regions lie at residues 41–44 (DSMQ) and 165–169 (QRIVR).

The protein belongs to the IPP transferase family. In terms of assembly, monomer. Mg(2+) is required as a cofactor.

The catalysed reaction is adenosine(37) in tRNA + dimethylallyl diphosphate = N(6)-dimethylallyladenosine(37) in tRNA + diphosphate. Its function is as follows. Catalyzes the transfer of a dimethylallyl group onto the adenine at position 37 in tRNAs that read codons beginning with uridine, leading to the formation of N6-(dimethylallyl)adenosine (i(6)A). The sequence is that of tRNA dimethylallyltransferase from Rhizobium rhizogenes (strain K84 / ATCC BAA-868) (Agrobacterium radiobacter).